Reading from the N-terminus, the 907-residue chain is Phosphoenolpyruvate carboxylase (907 aa).

Active-site residues include H138 and K570.

Belongs to the PEPCase type 1 family. Mg(2+) is required as a cofactor.

The catalysed reaction is oxaloacetate + phosphate = phosphoenolpyruvate + hydrogencarbonate. Forms oxaloacetate, a four-carbon dicarboxylic acid source for the tricarboxylic acid cycle. The sequence is that of Phosphoenolpyruvate carboxylase from Streptococcus mutans serotype c (strain ATCC 700610 / UA159).